Here is a 505-residue protein sequence, read N- to C-terminus: Lysine--tRNA ligase, heat inducible (505 aa).

2 positions are modified to N6-acetyllysine: K114 and K156. Mg(2+)-binding residues include E415 and E422.

This sequence belongs to the class-II aminoacyl-tRNA synthetase family. Homodimer. Requires Mg(2+) as cofactor.

It is found in the cytoplasm. The catalysed reaction is tRNA(Lys) + L-lysine + ATP = L-lysyl-tRNA(Lys) + AMP + diphosphate. The polypeptide is Lysine--tRNA ligase, heat inducible (lysU) (Escherichia coli O6:H1 (strain CFT073 / ATCC 700928 / UPEC)).